The primary structure comprises 176 residues: Peptide methionine sulfoxide reductase MsrA (176 aa).

Cysteine 12 is an active-site residue.

The protein belongs to the MsrA Met sulfoxide reductase family.

The catalysed reaction is L-methionyl-[protein] + [thioredoxin]-disulfide + H2O = L-methionyl-(S)-S-oxide-[protein] + [thioredoxin]-dithiol. It carries out the reaction [thioredoxin]-disulfide + L-methionine + H2O = L-methionine (S)-S-oxide + [thioredoxin]-dithiol. In terms of biological role, has an important function as a repair enzyme for proteins that have been inactivated by oxidation. Catalyzes the reversible oxidation-reduction of methionine sulfoxide in proteins to methionine. The chain is Peptide methionine sulfoxide reductase MsrA from Thermus thermophilus (strain ATCC 27634 / DSM 579 / HB8).